We begin with the raw amino-acid sequence, 327 residues long: Tetraacyldisaccharide 4'-kinase (327 aa).

Thr-52–Thr-59 is an ATP binding site.

The protein belongs to the LpxK family.

It carries out the reaction a lipid A disaccharide + ATP = a lipid IVA + ADP + H(+). The protein operates within glycolipid biosynthesis; lipid IV(A) biosynthesis; lipid IV(A) from (3R)-3-hydroxytetradecanoyl-[acyl-carrier-protein] and UDP-N-acetyl-alpha-D-glucosamine: step 6/6. Its function is as follows. Transfers the gamma-phosphate of ATP to the 4'-position of a tetraacyldisaccharide 1-phosphate intermediate (termed DS-1-P) to form tetraacyldisaccharide 1,4'-bis-phosphate (lipid IVA). This chain is Tetraacyldisaccharide 4'-kinase, found in Methylorubrum extorquens (strain PA1) (Methylobacterium extorquens).